Consider the following 23-residue polypeptide: IIGDTINGAIANANNIVGKIGII.

As to expression, expressed in skin glands.

It is found in the secreted. Functionally, may act as an antimicrobial peptide. This chain is Septenin 2a, found in Osteopilus septentrionalis (Cuban treefrog).